A 795-amino-acid chain; its full sequence is Protein ROOT HAIR DEFECTIVE 3 homolog 1 (795 aa).

Topologically, residues Met-1–Leu-682 are cytoplasmic. In terms of domain architecture, GB1/RHD3-type G spans Gly-39–Arg-254. Gly-49–Ser-56 contributes to the GTP binding site. The stretch at Val-218 to Ser-244 forms a coiled coil. The chain crosses the membrane as a helical span at residues Pro-683–Leu-703. Topologically, residues Arg-704 to Pro-706 are lumenal. The helical transmembrane segment at Leu-707–Asp-727 threads the bilayer. Over Ile-728–Asp-795 the chain is Cytoplasmic. The segment at Gln-761–Asp-795 is disordered. Residues Ser-775–Asn-784 are compositionally biased toward low complexity. Residues Pro-785–Asp-795 show a composition bias toward basic and acidic residues.

Belongs to the TRAFAC class dynamin-like GTPase superfamily. GB1/RHD3 GTPase family. RHD3 subfamily. In terms of tissue distribution, specifically expressed in flowers.

It localises to the endoplasmic reticulum membrane. In terms of biological role, probable GTP-binding protein that may be involved in cell development. The chain is Protein ROOT HAIR DEFECTIVE 3 homolog 1 from Arabidopsis thaliana (Mouse-ear cress).